Reading from the N-terminus, the 7756-residue chain is Linear gramicidin synthase subunit C (7756 aa).

6 Carrier domains span residues 977–1052, 2042–2116, 3557–3632, 4621–4695, 6141–6216, and 7200–7274; these read EPRN…AALQ, APAT…ADSS, APRT…ASLL, APAT…TVTD, APRK…AGLL, and APET…GDSV. 6 positions are modified to O-(pantetheine 4'-phosphoryl)serine: Ser-1012, Ser-2077, Ser-3592, Ser-4656, Ser-6176, and Ser-7235.

The protein belongs to the ATP-dependent AMP-binding enzyme family. Large multienzyme complex composed of 4 subunits; LgrA, LgrB, LgrC and LgrD. Requires pantetheine 4'-phosphate as cofactor.

Functionally, activates the 7th to 12th amino acids (Val, D-Val, Trp, D-Leu, Xaa and D-Leu) in linear gramicidin and catalyzes the formation of the peptide bond between them. This enzyme is also responsible for the epimerization of the 8th (D-Val), the 10th (D-Leu) and 12th (D-Leu) amino acids. The 11th (Xaa) amino acid is Trp in linear gramicidin A; Phe in linear gramicidin B and Tyr in linear gramicidin C. This Brevibacillus parabrevis protein is Linear gramicidin synthase subunit C (lgrC).